Reading from the N-terminus, the 95-residue chain is Co-chaperonin GroES (95 aa).

The protein belongs to the GroES chaperonin family. In terms of assembly, heptamer of 7 subunits arranged in a ring. Interacts with the chaperonin GroEL.

Its subcellular location is the cytoplasm. In terms of biological role, together with the chaperonin GroEL, plays an essential role in assisting protein folding. The GroEL-GroES system forms a nano-cage that allows encapsulation of the non-native substrate proteins and provides a physical environment optimized to promote and accelerate protein folding. GroES binds to the apical surface of the GroEL ring, thereby capping the opening of the GroEL channel. The protein is Co-chaperonin GroES of Streptococcus mutans serotype c (strain ATCC 700610 / UA159).